We begin with the raw amino-acid sequence, 273 residues long: Diaminopimelate epimerase (273 aa).

Residues asparagine 11 and asparagine 60 each coordinate substrate. Cysteine 69 functions as the Proton donor in the catalytic mechanism. Residues 70–71 (GN), asparagine 181, and 199–200 (ER) each bind substrate. The active-site Proton acceptor is the cysteine 209. Substrate is bound at residue 210-211 (GT).

The protein belongs to the diaminopimelate epimerase family. As to quaternary structure, homodimer.

Its subcellular location is the cytoplasm. It carries out the reaction (2S,6S)-2,6-diaminopimelate = meso-2,6-diaminopimelate. Its pathway is amino-acid biosynthesis; L-lysine biosynthesis via DAP pathway; DL-2,6-diaminopimelate from LL-2,6-diaminopimelate: step 1/1. Functionally, catalyzes the stereoinversion of LL-2,6-diaminopimelate (L,L-DAP) to meso-diaminopimelate (meso-DAP), a precursor of L-lysine and an essential component of the bacterial peptidoglycan. This chain is Diaminopimelate epimerase, found in Helicobacter pylori (strain ATCC 700392 / 26695) (Campylobacter pylori).